A 344-amino-acid chain; its full sequence is UDP-N-acetylenolpyruvoylglucosamine reductase (344 aa).

Residues 15 to 185 form the FAD-binding PCMH-type domain; that stretch reads LPACANQIIE…ISVGLKLAKA (171 aa). The active site involves Arg161. The active-site Proton donor is the Ser231. Glu327 is a catalytic residue.

It belongs to the MurB family. It depends on FAD as a cofactor.

It is found in the cytoplasm. It catalyses the reaction UDP-N-acetyl-alpha-D-muramate + NADP(+) = UDP-N-acetyl-3-O-(1-carboxyvinyl)-alpha-D-glucosamine + NADPH + H(+). It functions in the pathway cell wall biogenesis; peptidoglycan biosynthesis. Functionally, cell wall formation. This is UDP-N-acetylenolpyruvoylglucosamine reductase from Haemophilus ducreyi (strain 35000HP / ATCC 700724).